The chain runs to 86 residues: Small ribosomal subunit protein bS18 (86 aa).

This sequence belongs to the bacterial ribosomal protein bS18 family. Part of the 30S ribosomal subunit. Forms a tight heterodimer with protein bS6.

Its function is as follows. Binds as a heterodimer with protein bS6 to the central domain of the 16S rRNA, where it helps stabilize the platform of the 30S subunit. The polypeptide is Small ribosomal subunit protein bS18 (Maridesulfovibrio salexigens (strain ATCC 14822 / DSM 2638 / NCIMB 8403 / VKM B-1763) (Desulfovibrio salexigens)).